The primary structure comprises 902 residues: 4-hydroxyphenylacetate decarboxylase glycyl radical subunit (902 aa).

One can recognise a PFL domain in the interval 38–774 (KRAEDLLDVY…ATLATPDGRL (737 aa)). Ser-348 and Cys-507 together coordinate 4-hydroxyphenylacetate. The active-site Cysteine radical intermediate is Cys-507. Glu-509 serves as the catalytic Proton donor. 4-hydroxyphenylacetate-binding residues include His-540 and Glu-641. The region spanning 782–902 (GSVSAYAGTD…VIARTEYEGV (121 aa)) is the Glycine radical domain. At Gly-877 the chain carries Glycine radical.

This sequence belongs to the glycyl radical enzyme (GRE) family. HPAD subfamily. In terms of assembly, heterooctamer consisting of 4 large (HpdB) subunits and 4 small (HpdC) subunits, arranged as a tetramer of heterodimers. Also forms a catalytically inactive homodimer. In terms of processing, requires the activating protein CsdA to generate the key active site glycyl radical that is involved in catalysis. Post-translationally, phosphorylated on serine. Phosphorylation may trigger the formation of the active heterooctamers and thereby regulates enzyme activity.

It catalyses the reaction 4-hydroxyphenylacetate + H(+) = 4-methylphenol + CO2. It carries out the reaction 3,4-dihydroxyphenylacetate + H(+) = 4-methylcatechol + CO2. Its function is as follows. Glycyl radical subunit of the HPA decarboxylase that decarboxylates phenylacetates with a hydroxyl group in the p-position. Active toward 4-hydroxyphenylacetate and 3,4-dihydroxyphenylacetate, forming 4-methylphenol and 4-methylcatechol, respectively. Is likely involved in the catabolism of aromatic amino acids such as tyrosine fermentation. 4-methylphenol (p-cresol) formation provides metabolic toxicity, which allows an active suppression of other microbes and may provide growth advantages for the producers in highly competitive environments. The large subunit is the catalytic subunit that binds the substrate. The protein is 4-hydroxyphenylacetate decarboxylase glycyl radical subunit of Clostridioides difficile (strain 630) (Peptoclostridium difficile).